Reading from the N-terminus, the 152-residue chain is Sulfur-rich protein (152 aa).

Residues 1–11 (MSTTPIVSGVT) are compositionally biased toward polar residues. Residues 1–21 (MSTTPIVSGVTSQNNSSENVS) form a disordered region. A compositionally biased stretch (low complexity) spans 12 to 21 (SQNNSSENVS). A run of 2 helical transmembrane segments spans residues 44-64 (VGLA…LFIL) and 73-93 (IYLA…ILSM).

Its subcellular location is the membrane. This chain is Sulfur-rich protein (srp), found in Chlamydia muridarum (strain MoPn / Nigg).